The sequence spans 197 residues: Large ribosomal subunit protein uL5 (197 aa).

This sequence belongs to the universal ribosomal protein uL5 family. In terms of assembly, part of the 50S ribosomal subunit; contacts the 5S rRNA and probably tRNA. Forms a bridge to the 30S subunit in the 70S ribosome.

Functionally, this is one of the proteins that bind and probably mediate the attachment of the 5S RNA into the large ribosomal subunit, where it forms part of the central protuberance. In the 70S ribosome it contacts protein S13 of the 30S subunit (bridge B1b), connecting the 2 subunits; this bridge is implicated in subunit movement. May contact the P site tRNA; the 5S rRNA and some of its associated proteins might help stabilize positioning of ribosome-bound tRNAs. This Caldivirga maquilingensis (strain ATCC 700844 / DSM 13496 / JCM 10307 / IC-167) protein is Large ribosomal subunit protein uL5.